A 364-amino-acid polypeptide reads, in one-letter code: GTPase Obg (364 aa).

In terms of domain architecture, Obg spans 1 to 159 (MKFIDEARIE…RNLRLELKVL (159 aa)). Residues 128-147 (IHFKSSTNRAPRQKTDGKAG) form a disordered region. Residues 160-334 (ADVGLLGMPN…LVHAIQEYLD (175 aa)) enclose the OBG-type G domain. GTP-binding positions include 166 to 173 (GMPNAGKS), 191 to 195 (FTTLH), 213 to 216 (DIPG), 284 to 287 (NKLD), and 315 to 317 (SAL). Mg(2+)-binding residues include S173 and T193. Positions 340–364 (EDAAAAAPDQRLDPTLHNVDHDDQA) are disordered. Positions 349–364 (QRLDPTLHNVDHDDQA) are enriched in basic and acidic residues.

The protein belongs to the TRAFAC class OBG-HflX-like GTPase superfamily. OBG GTPase family. As to quaternary structure, monomer. Mg(2+) serves as cofactor.

It is found in the cytoplasm. Functionally, an essential GTPase which binds GTP, GDP and possibly (p)ppGpp with moderate affinity, with high nucleotide exchange rates and a fairly low GTP hydrolysis rate. Plays a role in control of the cell cycle, stress response, ribosome biogenesis and in those bacteria that undergo differentiation, in morphogenesis control. This chain is GTPase Obg, found in Ralstonia pickettii (strain 12J).